A 115-amino-acid chain; its full sequence is MARAAATQLVLVAMVAAMLIVATDAAISCGQVSSALSPCISYARGNGAKPPVACCSGVKRLAGAAQSTADKQAACKCIKSAAGGLNAGKAAGIPSMCGVSVPYAISASVDCSKIR.

An N-terminal signal peptide occupies residues 1–25 (MARAAATQLVLVAMVAAMLIVATDA). 4 cysteine pairs are disulfide-bonded: Cys29/Cys77, Cys39/Cys54, Cys55/Cys97, and Cys75/Cys111.

This sequence belongs to the plant LTP family.

Plant non-specific lipid-transfer proteins transfer phospholipids as well as galactolipids across membranes. May play a role in wax or cutin deposition in the cell walls of expanding epidermal cells and certain secretory tissues. The protein is Non-specific lipid-transfer protein 4.2 (LTP4.2) of Hordeum vulgare (Barley).